Here is a 144-residue protein sequence, read N- to C-terminus: Interferon-induced transmembrane protein 2 (144 aa).

Position 1 is an N-acetylmethionine (methionine 1). The Cytoplasmic segment spans residues 1 to 56 (MSHNSQAFLSTNAGLPPSYETIKEEYGVTELGEPSNSAVVRTTVINMPREVSVPDH). Residue tyrosine 19 is modified to Phosphotyrosine. The helical intramembrane region spans 57–77 (VVWSLFNTLFFNACCLGFVAY). 3 S-palmitoyl cysteine lipidation sites follow: cysteine 70, cysteine 71, and cysteine 104. Over 78–110 (AYSVKSRDRKMVGDVVGAQAYASTAKCLNISSL) the chain is Cytoplasmic. Residues 111–131 (IFSILMVIICIIIFSTTSVVV) form a helical membrane-spanning segment. At 132 to 144 (FQSFAQRTPHSGF) the chain is on the extracellular side.

Belongs to the CD225/Dispanin family. Interacts with CD81. Palmitoylation on membrane-proximal cysteines controls clustering in membrane compartments and antiviral activity. Post-translationally, phosphorylation at Tyr-19 is required for endosomal and lysosomal location. In terms of tissue distribution, predominantly expressed in nascent primordial germ cells, as well as in gonadal germ cells.

The protein localises to the cell membrane. It is found in the lysosome membrane. The protein resides in the late endosome membrane. IFN-induced antiviral protein which inhibits the entry of viruses to the host cell cytoplasm, permitting endocytosis, but preventing subsequent viral fusion and release of viral contents into the cytosol. Active against multiple viruses, including influenza A virus, SARS coronavirus (SARS-CoV), Marburg virus (MARV) and Ebola virus (EBOV), Dengue virus (DNV) and West Nile virus (WNV). Can inhibit: influenza virus hemagglutinin protein-mediated viral entry, MARV and EBOV GP1,2-mediated viral entry and SARS-CoV S protein-mediated viral entry. Induces cell cycle arrest and mediates apoptosis by caspase activation and in p53-independent manner. This chain is Interferon-induced transmembrane protein 2 (Ifitm2), found in Mus musculus (Mouse).